The following is a 369-amino-acid chain: 2-aminoethylphosphonate--pyruvate transaminase 1 (369 aa).

Lysine 191 carries the N6-(pyridoxal phosphate)lysine modification.

The protein belongs to the class-V pyridoxal-phosphate-dependent aminotransferase family. PhnW subfamily. In terms of assembly, homodimer. It depends on pyridoxal 5'-phosphate as a cofactor.

The catalysed reaction is (2-aminoethyl)phosphonate + pyruvate = phosphonoacetaldehyde + L-alanine. Involved in phosphonate degradation. The sequence is that of 2-aminoethylphosphonate--pyruvate transaminase 1 from Burkholderia lata (strain ATCC 17760 / DSM 23089 / LMG 22485 / NCIMB 9086 / R18194 / 383).